A 31-amino-acid polypeptide reads, in one-letter code: Cytochrome b6-f complex subunit 6 (31 aa).

Residues 4–24 (VISYFGFLLVALAFTLVTYLG) form a helical membrane-spanning segment.

The protein belongs to the PetL family. As to quaternary structure, the 4 large subunits of the cytochrome b6-f complex are cytochrome b6, subunit IV (17 kDa polypeptide, PetD), cytochrome f and the Rieske protein, while the 4 small subunits are PetG, PetL, PetM and PetN. The complex functions as a dimer.

The protein localises to the plastid. It is found in the chloroplast thylakoid membrane. Component of the cytochrome b6-f complex, which mediates electron transfer between photosystem II (PSII) and photosystem I (PSI), cyclic electron flow around PSI, and state transitions. PetL is important for photoautotrophic growth as well as for electron transfer efficiency and stability of the cytochrome b6-f complex. The chain is Cytochrome b6-f complex subunit 6 from Nephroselmis olivacea (Green alga).